Consider the following 636-residue polypeptide: Beta-galactosidase-1-like protein 2 (636 aa).

The signal sequence occupies residues 1-32 (MTTWSLRRRPARTLGLLLLVVLGFLVLRRLDW). The active-site Proton donor is the E201. The Nucleophile role is filled by E277.

It belongs to the glycosyl hydrolase 35 family.

Its subcellular location is the secreted. This chain is Beta-galactosidase-1-like protein 2 (GLB1L2), found in Homo sapiens (Human).